A 538-amino-acid polypeptide reads, in one-letter code: Putative cysteine ligase BshC (538 aa).

Residues 460–484 are a coiled coil; that stretch reads KINEQIELLERMLKRNVEKKHEVEL.

It belongs to the BshC family.

Involved in bacillithiol (BSH) biosynthesis. May catalyze the last step of the pathway, the addition of cysteine to glucosamine malate (GlcN-Mal) to generate BSH. The chain is Putative cysteine ligase BshC from Bacillus thuringiensis subsp. konkukian (strain 97-27).